Here is an 86-residue protein sequence, read N- to C-terminus: MSKQPVSNVRAIQANINIPMGAFRPGAGQPPRRKECTPEVEEGVPPTSDEEKKPIPGAKKLPGPAVNLSEIQNIKSELKYVPKAEQ.

The disordered stretch occupies residues 20–64 (MGAFRPGAGQPPRRKECTPEVEEGVPPTSDEEKKPIPGAKKLPGP).

Belongs to the SMPX family.

In terms of biological role, plays a role in the regulatory network through which muscle cells coordinate their structural and functional states during growth, adaptation, and repair. The chain is Small muscular protein (SMPX) from Pongo abelii (Sumatran orangutan).